We begin with the raw amino-acid sequence, 279 residues long: Pantothenate synthetase (279 aa).

Position 31–38 (31–38 (MGALHEGH)) interacts with ATP. The active-site Proton donor is His-38. Gln-62 provides a ligand contact to (R)-pantoate. Gln-62 provides a ligand contact to beta-alanine. Residue 148 to 151 (GEKD) coordinates ATP. Gln-154 provides a ligand contact to (R)-pantoate. Residues Val-177 and 185–188 (LSSR) contribute to the ATP site.

The protein belongs to the pantothenate synthetase family. Homodimer.

The protein resides in the cytoplasm. The enzyme catalyses (R)-pantoate + beta-alanine + ATP = (R)-pantothenate + AMP + diphosphate + H(+). The protein operates within cofactor biosynthesis; (R)-pantothenate biosynthesis; (R)-pantothenate from (R)-pantoate and beta-alanine: step 1/1. Its function is as follows. Catalyzes the condensation of pantoate with beta-alanine in an ATP-dependent reaction via a pantoyl-adenylate intermediate. This Cereibacter sphaeroides (strain ATCC 17023 / DSM 158 / JCM 6121 / CCUG 31486 / LMG 2827 / NBRC 12203 / NCIMB 8253 / ATH 2.4.1.) (Rhodobacter sphaeroides) protein is Pantothenate synthetase.